Consider the following 462-residue polypeptide: Cysteine--tRNA ligase (462 aa).

Cys-29 lines the Zn(2+) pocket. Positions 31–41 match the 'HIGH' region motif; the sequence is PTVYDHAHIGN. Zn(2+) is bound by residues Cys-214, His-239, and Glu-243. The 'KMSKS' region signature appears at 272–276; it reads KMSKS. Position 275 (Lys-275) interacts with ATP.

The protein belongs to the class-I aminoacyl-tRNA synthetase family. In terms of assembly, monomer. Zn(2+) serves as cofactor.

The protein resides in the cytoplasm. It carries out the reaction tRNA(Cys) + L-cysteine + ATP = L-cysteinyl-tRNA(Cys) + AMP + diphosphate. The sequence is that of Cysteine--tRNA ligase from Azorhizobium caulinodans (strain ATCC 43989 / DSM 5975 / JCM 20966 / LMG 6465 / NBRC 14845 / NCIMB 13405 / ORS 571).